The primary structure comprises 333 residues: Foldase protein PrsA (333 aa).

Positions 1–22 (MKKSTKLLAGIVTLASAMTLAA) are cleaved as a signal peptide. Cys-23 carries N-palmitoyl cysteine lipidation. Residue Cys-23 is the site of S-diacylglycerol cysteine attachment. The region spanning 145–240 (TPEMTTQVIT…NKFYIVKVTK (96 aa)) is the PpiC domain. The interval 301–333 (DKKASKANTSKSDQKTSSDSSKDSQSSKSKSEK) is disordered. Over residues 312–322 (SDQKTSSDSSK) the composition is skewed to basic and acidic residues. Over residues 323-333 (DSQSSKSKSEK) the composition is skewed to low complexity.

The protein belongs to the PrsA family.

The protein localises to the cell membrane. The enzyme catalyses [protein]-peptidylproline (omega=180) = [protein]-peptidylproline (omega=0). Its function is as follows. Plays a major role in protein secretion by helping the post-translocational extracellular folding of several secreted proteins. This is Foldase protein PrsA from Streptococcus equi subsp. zooepidemicus (strain H70).